A 456-amino-acid chain; its full sequence is NADPH-ferredoxin reductase FprA (456 aa).

Residues S17, E43, L51, and V87 each contribute to the FAD site. NADP(+) contacts are provided by residues R113, 158 to 161, 202 to 203, and E214; these read NGNV and RR. FAD contacts are provided by residues W362 and 369 to 371; that span reads GVI. G369 contacts NADP(+).

This sequence belongs to the ferredoxin--NADP reductase type 1 family. As to quaternary structure, monomer. It depends on FAD as a cofactor.

The enzyme catalyses 2 reduced [2Fe-2S]-[ferredoxin] + NADP(+) + H(+) = 2 oxidized [2Fe-2S]-[ferredoxin] + NADPH. May serve as electron transfer protein and supply electrons to P450 systems. The protein is NADPH-ferredoxin reductase FprA (fprA) of Mycobacterium leprae (strain TN).